The primary structure comprises 681 residues: MDLYMIVLLSLCGLLRAQETTDTISLDNCCEDGKKRGLESQDCSSLPLISESTTCRVVQEQCCSAVLEDSICTSGINMAKDQSSCDALLSGSSTCETKTTKMCCECCLLGSSRCRIRVSPVSSVCRWSISRGPGVRSCCVDKQPAHGVQPSKGDAQNTEDQCRAAGCAQRCLNGTCSCLDGFKLKTDGKHCEDINECLLGPHHCVTGERCINTLGSYRCQREISCGTGYELTDNNKCKDIDECDLGTHNCAAEMECQNTAGSFRCRPRMQCAAGFIQDALGSCIDINECVSVTALSRGQMCFNTVGSFICQRHSVTCGRGYHLNAEGTRCVDIDECAGPDNSCDGHGCINLVGSYRCECRTGFIFNSISRSCEDIDECRNYPGRLCAHKCENILGSYKCSCTAGFKLADDGRNCDDVNECESSPCSQGCANVYGSYQSYCRRGYQLSDADGITCEDIDECALPTGGHICSYRCHNTPGSFHCTCPASGYTLAANGRSCQDIDECLTGTHSCSESESCFNIQGGFRCLSFDCPANYRRSGDTRPRVDRADIIRCVKSCQHNDISCVLNPILSHSHTAISLPTFREFNKPEEIVFLRSPTPTHLPHMDSPEIVYDILEGNIQNSFDIIKRLDHGMIVGVVKQVRPLVGPVRTVLKLAMNYVTNGVVSHRNIINVRIYVSEFWF.

Residues 1 to 17 (MDLYMIVLLSLCGLLRA) form the signal peptide. Disulfide bonds link Cys29-Cys55, Cys30-Cys62, Cys43-Cys63, Cys72-Cys103, Cys85-Cys104, Cys106-Cys125, Cys107-Cys138, Cys114-Cys139, Cys162-Cys171, Cys167-Cys176, Cys178-Cys191, Cys197-Cys210, Cys204-Cys219, Cys225-Cys237, Cys243-Cys256, Cys250-Cys265, Cys271-Cys283, Cys289-Cys301, Cys317-Cys330, Cys336-Cys348, Cys343-Cys357, Cys359-Cys372, Cys378-Cys390, Cys386-Cys399, Cys401-Cys414, Cys420-Cys429, Cys440-Cys454, Cys460-Cys473, Cys469-Cys482, Cys484-Cys498, Cys504-Cys517, Cys511-Cys526, and Cys531-Cys553. Anaphylatoxin-like domains follow at residues 29–63 (CCED…EQCC), 68–107 (EDSI…CECC), and 108–139 (LLGS…RSCC). An EGF-like 1 domain is found at 158–192 (TEDQCRAAGCAQRCLNGTCSCLDGFKLKTDGKHCE). Asn173 carries an N-linked (GlcNAc...) asparagine glycan. The EGF-like 2; calcium-binding domain maps to 193 to 238 (DINECLLGPHHCVTGERCINTLGSYRCQREISCGTGYELTDNNKCK). Residues 239–284 (DIDECDLGTHNCAAEMECQNTAGSFRCRPRMQCAAGFIQDALGSCI) enclose the EGF-like 3; calcium-binding domain. Residues 285–331 (DINECVSVTALSRGQMCFNTVGSFICQRHSVTCGRGYHLNAEGTRCV) form the EGF-like 4; calcium-binding domain. Residues 332-373 (DIDECAGPDNSCDGHGCINLVGSYRCECRTGFIFNSISRSCE) form the EGF-like 5; calcium-binding domain. The EGF-like 6; calcium-binding domain occupies 374-415 (DIDECRNYPGRLCAHKCENILGSYKCSCTAGFKLADDGRNCD). The 40-residue stretch at 416–455 (DVNECESSPCSQGCANVYGSYQSYCRRGYQLSDADGITCE) folds into the EGF-like 7; calcium-binding domain. One can recognise an EGF-like 8; calcium-binding domain in the interval 456–499 (DIDECALPTGGHICSYRCHNTPGSFHCTCPASGYTLAANGRSCQ). Residues 500–554 (DIDECLTGTHSCSESESCFNIQGGFRCLSFDCPANYRRSGDTRPRVDRADIIRCV) form the EGF-like 9; calcium-binding domain.

The protein belongs to the fibulin family. As to quaternary structure, homomultimerizes and interacts with various extracellular matrix components such as FN1, LAMA1, NID, AGC1 and CSPG2.

It is found in the secreted. It localises to the extracellular space. The protein localises to the extracellular matrix. Incorporated into fibronectin-containing matrix fibers. May play a role in cell adhesion and migration along protein fibers within the extracellular matrix (ECM). Could be important for certain developmental processes and contribute to the supramolecular organization of ECM architecture, in particular to those of basement membranes. In Danio rerio (Zebrafish), this protein is Fibulin-1 (fbln1).